The following is a 326-amino-acid chain: MFRLTLLLAYVACVYGGGAPYGADRGKCRGNDYEKDGLCCTSCPPGSYASRLCGPGSDTVCSPCKNETFTASTNHAPACVSCRGRCTGHLSESQSCDKTRDRVCDCSAGNYCLLKGQEGCRICAPKTKCPAGYGVSGHTRTGDVLCTKCPRYTYSDAVSSTETCTSSFNYISVEFNLYPVNDTSCTTTAGPNEVVKTSEFSVTLNHTDCDPVFHTEYYGTSGSEGAGGFFTGMDRYQNTTKMCTLNIEIRCVEGDAVRTIPRTSDGVGVLSHSETITVIGGCLSDVNVDIEYSDSNHPEEVDDFVEYHWGTRLRLFPSPKRCRLVS.

The first 16 residues, 1–16, serve as a signal peptide directing secretion; that stretch reads MFRLTLLLAYVACVYG. TNFR-Cys repeat units follow at residues 27–62, 63–104, 105–147, and 148–186; these read KCRG…TVCS, PCKN…DRVC, DCSA…VLCT, and KCPR…TSCT. Intrachain disulfides connect Cys-28-Cys-39, Cys-40-Cys-53, Cys-43-Cys-61, Cys-64-Cys-79, Cys-82-Cys-96, Cys-86-Cys-104, Cys-106-Cys-120, Cys-123-Cys-146, Cys-129-Cys-149, and Cys-164-Cys-185. Asn-66 carries N-linked (GlcNAc...) asparagine; by host glycosylation. 3 N-linked (GlcNAc...) asparagine; by host glycosylation sites follow: Asn-181, Asn-205, and Asn-238.

In terms of biological role, binds to TNF-alpha and beta. Probably prevents TNF to reach cellular target and thereby deampening the potential antiviral effects of the cytokine. This chain is Tumor necrosis factor soluble receptor, found in Oryctolagus cuniculus (Rabbit).